The chain runs to 327 residues: Movement protein (327 aa).

A coiled-coil region spans residues serine 297 to glutamate 327.

It belongs to the caulimoviridae movement protein family. Homotrimer, through the coiled-coil domain. Interacts with VAP. May interact (via N-terminus) with host prenylated Rab acceptor protein 1D (PRA1D).

It localises to the host cell junction. The protein localises to the host plasmodesma. Transports viral genome to neighboring plant cells directly through plasmosdesmata, without any budding. The movement protein allows efficient cell to cell propagation, by bypassing the host cell wall barrier. Acts by forming tubules structures that increase the size exclusion limit (SEL) of plasmodesmata, thereby allowing viral ribonucleocapsids to spread directly to neighboring cells. The protein is Movement protein of Arabidopsis thaliana (Mouse-ear cress).